The chain runs to 72 residues: MAKEEAITVDGTVLEPLPNAMFRVELENGHKVLAHISGKMRMHYIRILPGDKVTVELSPYDLSKGRITYRKK.

The S1-like domain maps to 1 to 72 (MAKEEAITVD…SKGRITYRKK (72 aa)).

Belongs to the IF-1 family. Component of the 30S ribosomal translation pre-initiation complex which assembles on the 30S ribosome in the order IF-2 and IF-3, IF-1 and N-formylmethionyl-tRNA(fMet); mRNA recruitment can occur at any time during PIC assembly.

It is found in the cytoplasm. In terms of biological role, one of the essential components for the initiation of protein synthesis. Stabilizes the binding of IF-2 and IF-3 on the 30S subunit to which N-formylmethionyl-tRNA(fMet) subsequently binds. Helps modulate mRNA selection, yielding the 30S pre-initiation complex (PIC). Upon addition of the 50S ribosomal subunit IF-1, IF-2 and IF-3 are released leaving the mature 70S translation initiation complex. The sequence is that of Translation initiation factor IF-1 from Leptospira borgpetersenii serovar Hardjo-bovis (strain L550).